A 300-amino-acid polypeptide reads, in one-letter code: LysM and putative peptidoglycan-binding domain-containing protein 3 (300 aa).

Residues 1–216 (MAGRNQNRTA…PYYGADWGMG (216 aa)) are Extracellular-facing. Asn7 and Asn26 each carry an N-linked (GlcNAc...) asparagine glycan. At Ser55 the chain carries Phosphoserine. Residues 65–109 (LTKDIQEGDTLNAVALQYCCTVADIKRVNNLISDQDFFALRSIKI) enclose the LysM domain. The segment at 136–157 (PYFQEQDTVPANDSPSSSESAG) is disordered. A compositionally biased stretch (polar residues) spans 140 to 156 (EQDTVPANDSPSSSESA). A glycan (N-linked (GlcNAc...) asparagine) is linked at Asn199. A helical membrane pass occupies residues 217-237 (WWTAVVIMLIVGIITPVFYLL). Residues 238-300 (YYEILAKVDV…LYRQDPQARD (63 aa)) lie on the Cytoplasmic side of the membrane. The segment at 253–300 (VDSSHLHPGLTPPSHHREMGNAIGPTKGIPVGQQDDHRLYRQDPQARD) is disordered. Residues 286–300 (QDDHRLYRQDPQARD) are compositionally biased toward basic and acidic residues.

It is found in the cell membrane. Its subcellular location is the golgi apparatus. Essential for Golgi structural integrity. The protein is LysM and putative peptidoglycan-binding domain-containing protein 3 (Lysmd3) of Rattus norvegicus (Rat).